Here is a 305-residue protein sequence, read N- to C-terminus: MGVLVKNLVEDLKLEVLNKGKDDIELNISDINRPGLQFSGFYNYFANERVQLIGKTEWSFLDVMSPELRKKRVAKFFQFETPCVIITRNLKPHKEVLENSRKYNRWLLNTSNISTRFTSKLMNYLDEKLAPETRLHGVLVDVYGIGILITGESGIGKSETALELIKRGHRLVADDAVDIKEIEGKLIGSSPYVTSGMLEVRGLGIIDVPSLYGLSSVLDIKTIGVIIHLEQWKKDQDYDRLGIDEINRDILNVPVRKITLPIRPGRNIAVIIEAAAANYRYNLNSNSSPVDTIGARMKEENLKNK.

Residues H136 and K157 contribute to the active site. 151-158 is an ATP binding site; it reads GESGIGKS. S158 lines the Mg(2+) pocket. The active-site Proton acceptor; for phosphorylation activity. Proton donor; for dephosphorylation activity is the D175. An important for the catalytic mechanism of both phosphorylation and dephosphorylation region spans residues 198-207; the sequence is LEVRGLGIID. E199 lines the Mg(2+) pocket. Residue R240 is part of the active site. Positions 261–266 are important for the catalytic mechanism of dephosphorylation; sequence PIRPGR.

It belongs to the HPrK/P family. As to quaternary structure, homohexamer. Requires Mg(2+) as cofactor.

The enzyme catalyses [HPr protein]-L-serine + ATP = [HPr protein]-O-phospho-L-serine + ADP + H(+). The catalysed reaction is [HPr protein]-O-phospho-L-serine + phosphate + H(+) = [HPr protein]-L-serine + diphosphate. Catalyzes the ATP- as well as the pyrophosphate-dependent phosphorylation of a specific serine residue in HPr, a phosphocarrier protein of the phosphoenolpyruvate-dependent sugar phosphotransferase system (PTS). HprK/P also catalyzes the pyrophosphate-producing, inorganic phosphate-dependent dephosphorylation (phosphorolysis) of seryl-phosphorylated HPr (P-Ser-HPr). The two antagonistic activities of HprK/P are regulated by several intracellular metabolites, which change their concentration in response to the absence or presence of rapidly metabolisable carbon sources (glucose, fructose, etc.) in the growth medium. Therefore, by controlling the phosphorylation state of HPr, HPrK/P is a sensor enzyme that plays a major role in the regulation of carbon metabolism and sugar transport: it mediates carbon catabolite repression (CCR), and regulates PTS-catalyzed carbohydrate uptake and inducer exclusion. The protein is HPr kinase/phosphorylase of Clostridium tetani (strain Massachusetts / E88).